The sequence spans 575 residues: Alpha-(1,6)-fucosyltransferase (575 aa).

Topologically, residues 1-9 are cytoplasmic; the sequence is MRAWTGSWR. The helical; Signal-anchor for type II membrane protein transmembrane segment at 10–30 threads the bilayer; sequence WIMLILFAWGTLLFYIGGHLV. The Lumenal segment spans residues 31–575; sequence RDNDHPDHSS…KYPTYPEAEK (545 aa). 3 disulfide bridges follow: Cys-204-Cys-266, Cys-212-Cys-230, and Cys-218-Cys-222. One can recognise a GT23 domain in the interval 206 to 493; that stretch reads KARKLVCNIN…PDASANFHSL (288 aa). Ser-278 is subject to Phosphoserine. The short motif at 299 to 305 is the SH3-binding element; the sequence is PRPPYLP. The important for donor substrate binding stretch occupies residues 365–366; sequence RR. A disulfide bond links Cys-465 and Cys-472. One can recognise an SH3 domain in the interval 502 to 563; the sequence is QNAHNQIAVY…PSYKVREKIE (62 aa).

It belongs to the glycosyltransferase 23 family. Tyrosine phosphorylated by PKDCC/VLK.

Its subcellular location is the golgi apparatus. It localises to the golgi stack membrane. The catalysed reaction is N(4)-{beta-D-GlcNAc-(1-&gt;2)-alpha-D-Man-(1-&gt;3)-[beta-D-GlcNAc-(1-&gt;2)-alpha-D-Man-(1-&gt;6)]-beta-D-Man-(1-&gt;4)-beta-D-GlcNAc-(1-&gt;4)-beta-D-GlcNAc}-L-asparaginyl-[protein] + GDP-beta-L-fucose = an N(4)-{beta-D-GlcNAc-(1-&gt;2)-alpha-D-Man-(1-&gt;3)-[beta-D-GlcNAc-(1-&gt;2)-alpha-D-Man-(1-&gt;6)]-beta-D-Man-(1-&gt;4)-beta-D-GlcNAc-(1-&gt;4)-[alpha-L-Fuc-(1-&gt;6)]-beta-D-GlcNAc}-L-asparaginyl-[protein] + GDP + H(+). It participates in protein modification; protein glycosylation. Catalyzes the addition of fucose in alpha 1-6 linkage to the first GlcNAc residue, next to the peptide chains in N-glycans. This chain is Alpha-(1,6)-fucosyltransferase (Fut8), found in Rattus norvegicus (Rat).